The sequence spans 386 residues: Erythronate-4-phosphate dehydrogenase (386 aa).

Residues serine 59 and threonine 81 each coordinate substrate. Aspartate 162 is an NAD(+) binding site. Arginine 239 is an active-site residue. An NAD(+)-binding site is contributed by aspartate 262. Glutamate 267 is a catalytic residue. Histidine 284 (proton donor) is an active-site residue. Glycine 287 lines the NAD(+) pocket. Residue tyrosine 288 participates in substrate binding.

It belongs to the D-isomer specific 2-hydroxyacid dehydrogenase family. PdxB subfamily. In terms of assembly, homodimer.

The protein localises to the cytoplasm. The catalysed reaction is 4-phospho-D-erythronate + NAD(+) = (R)-3-hydroxy-2-oxo-4-phosphooxybutanoate + NADH + H(+). It participates in cofactor biosynthesis; pyridoxine 5'-phosphate biosynthesis; pyridoxine 5'-phosphate from D-erythrose 4-phosphate: step 2/5. Functionally, catalyzes the oxidation of erythronate-4-phosphate to 3-hydroxy-2-oxo-4-phosphonooxybutanoate. The sequence is that of Erythronate-4-phosphate dehydrogenase from Psychrobacter cryohalolentis (strain ATCC BAA-1226 / DSM 17306 / VKM B-2378 / K5).